A 481-amino-acid polypeptide reads, in one-letter code: Glutamyl-tRNA(Gln) amidotransferase subunit A (481 aa).

Active-site charge relay system residues include K74 and S149. The active-site Acyl-ester intermediate is the S173.

It belongs to the amidase family. GatA subfamily. Heterotrimer of A, B and C subunits.

It carries out the reaction L-glutamyl-tRNA(Gln) + L-glutamine + ATP + H2O = L-glutaminyl-tRNA(Gln) + L-glutamate + ADP + phosphate + H(+). Functionally, allows the formation of correctly charged Gln-tRNA(Gln) through the transamidation of misacylated Glu-tRNA(Gln) in organisms which lack glutaminyl-tRNA synthetase. The reaction takes place in the presence of glutamine and ATP through an activated gamma-phospho-Glu-tRNA(Gln). The sequence is that of Glutamyl-tRNA(Gln) amidotransferase subunit A from Francisella philomiragia subsp. philomiragia (strain ATCC 25017 / CCUG 19701 / FSC 153 / O#319-036).